The following is a 223-amino-acid chain: Ribose-5-phosphate isomerase A (223 aa).

Substrate-binding positions include 28–31 (TGST), 81–84 (DGAD), and 94–97 (KGGG). Catalysis depends on glutamate 103, which acts as the Proton acceptor. Residue lysine 121 coordinates substrate.

The protein belongs to the ribose 5-phosphate isomerase family. In terms of assembly, homodimer.

The catalysed reaction is aldehydo-D-ribose 5-phosphate = D-ribulose 5-phosphate. It participates in carbohydrate degradation; pentose phosphate pathway; D-ribose 5-phosphate from D-ribulose 5-phosphate (non-oxidative stage): step 1/1. Its function is as follows. Catalyzes the reversible conversion of ribose-5-phosphate to ribulose 5-phosphate. In Herminiimonas arsenicoxydans, this protein is Ribose-5-phosphate isomerase A.